A 270-amino-acid chain; its full sequence is Acyl-[acyl-carrier-protein]--UDP-N-acetylglucosamine O-acyltransferase (270 aa).

This sequence belongs to the transferase hexapeptide repeat family. LpxA subfamily. Homotrimer.

It is found in the cytoplasm. It carries out the reaction a (3R)-hydroxyacyl-[ACP] + UDP-N-acetyl-alpha-D-glucosamine = a UDP-3-O-[(3R)-3-hydroxyacyl]-N-acetyl-alpha-D-glucosamine + holo-[ACP]. It participates in glycolipid biosynthesis; lipid IV(A) biosynthesis; lipid IV(A) from (3R)-3-hydroxytetradecanoyl-[acyl-carrier-protein] and UDP-N-acetyl-alpha-D-glucosamine: step 1/6. Involved in the biosynthesis of lipid A, a phosphorylated glycolipid that anchors the lipopolysaccharide to the outer membrane of the cell. The sequence is that of Acyl-[acyl-carrier-protein]--UDP-N-acetylglucosamine O-acyltransferase from Sinorhizobium medicae (strain WSM419) (Ensifer medicae).